The following is a 91-amino-acid chain: Putative septation protein SpoVG (91 aa).

This sequence belongs to the SpoVG family.

Could be involved in septation. The sequence is that of Putative septation protein SpoVG from Clostridium botulinum (strain Alaska E43 / Type E3).